A 593-amino-acid polypeptide reads, in one-letter code: 3-hydroxy-3-methylglutaryl-coenzyme A reductase (593 aa).

A disordered region spans residues 1–36; that stretch reads MDVRRRSINSIHQIPSVGGTAPPMLKPKQPTKVDAV. Transmembrane regions (helical) follow at residues 52–72 and 94–114; these read LYIT…YLLV and AIFT…IGLV. The linker stretch occupies residues 115 to 177; it reads QPFTSRSSHD…PVPISPPSSE (63 aa). Residues 178-593 are catalytic; sequence EDEEIIKSVV…SNKDVTKASS (416 aa). The active-site Charge relay system is the Glu272. An N-linked (GlcNAc...) asparagine glycan is attached at Asn336. The active-site Charge relay system is Lys404. An N-linked (GlcNAc...) asparagine glycan is attached at Asn449. The active-site Charge relay system is the Asp480. Residue His578 is the Proton donor of the active site. Asn582 carries an N-linked (GlcNAc...) asparagine glycan.

It belongs to the HMG-CoA reductase family.

It is found in the endoplasmic reticulum membrane. The enzyme catalyses (R)-mevalonate + 2 NADP(+) + CoA = (3S)-3-hydroxy-3-methylglutaryl-CoA + 2 NADPH + 2 H(+). It participates in metabolic intermediate biosynthesis; (R)-mevalonate biosynthesis; (R)-mevalonate from acetyl-CoA: step 3/3. Functionally, catalyzes the synthesis of mevalonate. The specific precursor of all isoprenoid compounds present in plants. In Camptotheca acuminata (Happy tree), this protein is 3-hydroxy-3-methylglutaryl-coenzyme A reductase.